Consider the following 419-residue polypeptide: Phosphatidylcholine:ceramide cholinephosphotransferase 1 (419 aa).

The SAM domain maps to 13–76; sequence WSPKKVADWL…LDMIETLKME (64 aa). A Phosphoserine modification is found at Ser-14. 5 consecutive transmembrane segments (helical) span residues 142-162, 190-210, 221-241, 282-302, and 310-330; these read FLAF…ISVV, FSIC…QWLL, FFCI…VTTL, MCGD…YLFI, and LWWY…CILL. The active site involves His-291. Residues 331 to 419 lie on the Cytoplasmic side of the membrane; it reads AHDHYTVDVV…VKYSRLVNDT (89 aa). Active-site residues include His-334 and Asp-338.

This sequence belongs to the sphingomyelin synthase family. As to expression, isoform 1 is widely expressed, isoform 2 shows a more narrow distribution and isoform 3 is detected only in testis and heart.

Its subcellular location is the golgi apparatus membrane. It carries out the reaction an N-acylsphing-4-enine + a 1,2-diacyl-sn-glycero-3-phosphocholine = a sphingomyelin + a 1,2-diacyl-sn-glycerol. The catalysed reaction is 1-(9Z-octadecenoyl)-2-acyl-sn-3-glycerol + a sphingomyelin = a 1-(9Z-octadecenoyl)-2-acyl-sn-glycero-3-phosphocholine + an N-acylsphing-4-enine. It catalyses the reaction N-hexadecanoylsphinganine + a 1,2-diacyl-sn-glycero-3-phosphocholine = N-hexadecanoyl-sphinganine-1-phosphocholine + a 1,2-diacyl-sn-glycerol. The enzyme catalyses N-hexadecanoyl-(4R)-hydroxysphinganine + a 1,2-diacyl-sn-glycero-3-phosphocholine = N-hexadecanoyl-(4R)-hydroxysphinganine-phosphocholine + a 1,2-diacyl-sn-glycerol. It carries out the reaction an N-acylsphing-4-enine + a 1,2-diacyl-sn-glycero-3-phosphoethanolamine = an N-acylsphing-4-enine 1-phosphoethanolamine + a 1,2-diacyl-sn-glycerol. It functions in the pathway sphingolipid metabolism. Major sphingomyelin synthase at the Golgi apparatus. Catalyzes the reversible transfer of phosphocholine moiety in sphingomyelin biosynthesis: in the forward reaction transfers phosphocholine head group of phosphatidylcholine (PC) on to ceramide (CER) to form ceramide phosphocholine (sphingomyelin, SM) and diacylglycerol (DAG) as by-product, and in the reverse reaction transfers phosphocholine from SM to DAG to form PC and CER. The direction of the reaction depends on the levels of CER and DAG in Golgi membranes. Converts the newly synthesized CER, that is transported from the endoplasmic reticulum to the trans-Golgi by the Cer transport protein (CERT), to SM. Can form a heteromeric complex with glucosylceramide synthase (GCS) increasing SMS activity and reducing glucosylceramide synthesis, a critical mechanism that controls the metabolic fate of CER in the Golgi. Does not use free phosphorylcholine or CDP-choline as donor. Can also transfer phosphoethanolamine head group of phosphatidylethanolamine (PE) on to CER to form ceramide phosphoethanolamine (CPE). Regulates receptor-mediated signal transduction via mitogenic DAG and proapoptotic CER, as well as via SM, a structural component of membrane rafts that serve as platforms for signal transduction and protein sorting. Plays a role in secretory transport via regulation of DAG pool at the Golgi apparatus and its downstream effects on PRKD1. Its function is as follows. (Microbial infection) Contributes to the brain SM production for Japanese encephalitis virus attachment and infection. The protein is Phosphatidylcholine:ceramide cholinephosphotransferase 1 (Sgms1) of Mus musculus (Mouse).